The sequence spans 478 residues: ATP-dependent DNA helicase RecQ (478 aa).

The region spanning 28-202 is the Helicase ATP-binding domain; the sequence is IDCLLARRDC…VEGLNLRSPE (175 aa). 41-48 contributes to the ATP binding site; sequence LPTGGGKS. The short motif at 142–145 is the DEAH box element; sequence DEAH. The Helicase C-terminal domain occupies 229 to 380; it reads QLRRFLLKHL…RAEVLSQQIP (152 aa). Residues Cys447, Cys467, Cys470, and Cys473 each contribute to the Zn(2+) site.

Belongs to the helicase family. RecQ subfamily. It depends on Mg(2+) as a cofactor. The cofactor is Zn(2+).

It carries out the reaction Couples ATP hydrolysis with the unwinding of duplex DNA by translocating in the 3'-5' direction.. It catalyses the reaction ATP + H2O = ADP + phosphate + H(+). Functionally, an ATP-dependent DNA helicase which unwinds DNA in a 3'-5' direction. This is ATP-dependent DNA helicase RecQ from Synechocystis sp. (strain ATCC 27184 / PCC 6803 / Kazusa).